The sequence spans 1401 residues: Lysine-specific demethylase 6A (1401 aa).

Residues 1 to 1095 (MKSCGVSLAT…TNIDLSDDKK (1095 aa)) are interaction with SUPT6H. 8 TPR repeats span residues 95 to 128 (SDFF…QSDY), 132 to 165 (AAFL…DPSF), 169 to 203 (KEIH…NPCT), 207 to 240 (AEIQ…ENLS), 245 to 285 (ATIL…DPNS), 286 to 319 (GQSW…SEAS), 321 to 353 (DTWC…DHGH), and 355 to 387 (AAWM…KNCS). Residues 439–453 (AMNTAQQNTSDNWSG) show a composition bias toward polar residues. The segment at 439–463 (AMNTAQQNTSDNWSGGNAPPPVEQQ) is disordered. Omega-N-methylarginine occurs at positions 519 and 549. Polar residues-rich tracts occupy residues 596-606 (NHVTGSGSNGN), 619-642 (HNRT…STQG), and 660-743 (LSST…STAS). Positions 596–745 (NHVTGSGSNG…ETPNSTASVE (150 aa)) are disordered. Ser-769 carries the post-translational modification Phosphoserine. Disordered regions lie at residues 795 to 863 (GTCD…EESQ), 914 to 941 (LLDK…PPTP), and 1043 to 1080 (FQES…GPFK). Residues 814–833 (SVASSPSSAISTATPSPKST) show a composition bias toward low complexity. Position 827 is a phosphothreonine (Thr-827). Ser-829 bears the Phosphoserine mark. The span at 834-848 (EQTTTNSVTSLNSPH) shows a compositional bias: polar residues. The segment covering 918–931 (CPPPRPPSSPYPPL) has biased composition (pro residues). Basic and acidic residues predominate over residues 1046–1063 (SLREENEKRSHHKDHSDS). In terms of domain architecture, JmjC spans 1095 to 1258 (KWKLQLHELT…YKLAVERYEW (164 aa)). Positions 1146, 1148, and 1226 each coordinate Fe cation. 4 residues coordinate Zn(2+): Cys-1331, Cys-1334, Cys-1358, and Cys-1361.

Belongs to the UTX family. Component of the MLL2/3 complex (also named ASCOM complex), at least composed of KMT2D/MLL2 or KMT2C/MLL3, ASH2L, RBBP5, WDR5, NCOA6, DPY30, KDM6A (or KDM6B), PAXIP1/PTIP, PAGR1 and alpha- and beta-tubulin. Interacts with TLE1. Interacts with SUPT6H. Interacts with SMARCA4. Interacts with PROSER1. L-ascorbate is required as a cofactor. The cofactor is Fe(2+). In terms of tissue distribution, expressed in brain, heart and spleen.

Its subcellular location is the nucleus. The catalysed reaction is N(6),N(6),N(6)-trimethyl-L-lysyl(27)-[histone H3] + 2 2-oxoglutarate + 2 O2 = N(6)-methyl-L-lysyl(27)-[histone H3] + 2 formaldehyde + 2 succinate + 2 CO2. Histone demethylase that specifically demethylates 'Lys-27' of histone H3, thereby playing a central role in histone code. Demethylates trimethylated and dimethylated but not monomethylated H3 'Lys-27'. Plays a central role in regulation of posterior development, by regulating HOX gene expression. Demethylation of 'Lys-27' of histone H3 is concomitant with methylation of 'Lys-4' of histone H3, and regulates the recruitment of the PRC1 complex and monoubiquitination of histone H2A. Plays a demethylase-independent role in chromatin remodeling to regulate T-box family member-dependent gene expression. The sequence is that of Lysine-specific demethylase 6A (Kdm6a) from Mus musculus (Mouse).